The primary structure comprises 138 residues: MAPK kinase substrate protein At1g80180 (138 aa).

The interval 52 to 138 (TSEVQDQTTK…RKRPAKRRSR (87 aa)) is disordered. Residues 69 to 81 (KPIRTDGGMERSR) show a composition bias toward basic and acidic residues. Ser-98 carries the phosphoserine modification. At Ser-105 the chain carries Phosphoserine; by MAPK6. A compositionally biased stretch (basic residues) spans 121 to 138 (QPGKKVNQRKRPAKRRSR).

In terms of tissue distribution, expressed in developing cotyledons, mature cotyledons, cotyledon epidermis and stomata.

In terms of biological role, may play a role in the regulation of stomata patterning. This chain is MAPK kinase substrate protein At1g80180, found in Arabidopsis thaliana (Mouse-ear cress).